We begin with the raw amino-acid sequence, 529 residues long: Probable alpha-galactosidase A (529 aa).

Residues 1–19 (MKALFAAITMAHALLQTQA) form the signal peptide. Residues C42 and C74 are joined by a disulfide bond. 4 N-linked (GlcNAc...) asparagine glycosylation sites follow: N45, N83, N89, and N119. Residues C122 and C152 are joined by a disulfide bond. The active-site Nucleophile is D150. N-linked (GlcNAc...) asparagine glycosylation is present at N199. The active-site Proton donor is the D208. A glycan (N-linked (GlcNAc...) asparagine) is linked at N351. Residues 408-528 (RVDAVSTGIV…GLPSGVRVSG (121 aa)) enclose the Ricin B-type lectin domain. 2 disulfides stabilise this stretch: C425–C438 and C462–C475.

The protein belongs to the glycosyl hydrolase 27 family.

The protein localises to the secreted. The catalysed reaction is Hydrolysis of terminal, non-reducing alpha-D-galactose residues in alpha-D-galactosides, including galactose oligosaccharides, galactomannans and galactolipids.. Its function is as follows. Hydrolyzes a variety of simple alpha-D-galactoside as well as more complex molecules such as oligosaccharides and polysaccharides. The sequence is that of Probable alpha-galactosidase A (aglA) from Aspergillus terreus (strain NIH 2624 / FGSC A1156).